The following is a 349-amino-acid chain: Probable transporter vicT (349 aa).

Residues 25-153 (IAAALLHALA…TALAGVVLVL (129 aa)) form the EamA domain. Transmembrane regions (helical) follow at residues 49 to 69 (PFTVLQIRLFITVLGCTAYLW), 89 to 109 (AAGGVFGACGFYLSISYLSLS), 111 to 131 (ATVLNFIAPLGAIMLTTYWEG), 133 to 153 (TFAFLDLIACITALAGVVLVL), 179 to 199 (LKGVVSGITGVAGGIVAFSAM), 215 to 235 (FGVSICIVTTAFSTIMPEVVW), 244 to 264 (LLAIIGILGLVMEYLLTAGLG), 269 to 289 (RVTIMIYSQVLWALFLDWAIW), and 294 to 314 (NVLTVLGSMVVVASLAVPYLF).

The protein belongs to the TPT transporter family. SLC35D subfamily.

The protein resides in the membrane. Its function is as follows. Probable transporter; part of the gene cluster that mediates the biosynthesis of the secondary metabolite victorin, the molecular basis for Victoria blight of oats. The sequence is that of Probable transporter vicT from Bipolaris victoriae (strain FI3) (Victoria blight of oats agent).